Here is a 1034-residue protein sequence, read N- to C-terminus: Error-prone DNA polymerase (1034 aa).

It belongs to the DNA polymerase type-C family. DnaE2 subfamily.

It localises to the cytoplasm. The enzyme catalyses DNA(n) + a 2'-deoxyribonucleoside 5'-triphosphate = DNA(n+1) + diphosphate. In terms of biological role, DNA polymerase involved in damage-induced mutagenesis and translesion synthesis (TLS). It is not the major replicative DNA polymerase. The chain is Error-prone DNA polymerase from Pseudomonas fluorescens (strain ATCC BAA-477 / NRRL B-23932 / Pf-5).